We begin with the raw amino-acid sequence, 447 residues long: Methylenetetrahydrofolate--tRNA-(uracil-5-)-methyltransferase TrmFO (447 aa).

Position 13 to 18 (13 to 18) interacts with FAD; the sequence is GAGLAG.

Belongs to the MnmG family. TrmFO subfamily. The cofactor is FAD.

It localises to the cytoplasm. The catalysed reaction is uridine(54) in tRNA + (6R)-5,10-methylene-5,6,7,8-tetrahydrofolate + NADH + H(+) = 5-methyluridine(54) in tRNA + (6S)-5,6,7,8-tetrahydrofolate + NAD(+). The enzyme catalyses uridine(54) in tRNA + (6R)-5,10-methylene-5,6,7,8-tetrahydrofolate + NADPH + H(+) = 5-methyluridine(54) in tRNA + (6S)-5,6,7,8-tetrahydrofolate + NADP(+). Its function is as follows. Catalyzes the folate-dependent formation of 5-methyl-uridine at position 54 (M-5-U54) in all tRNAs. The polypeptide is Methylenetetrahydrofolate--tRNA-(uracil-5-)-methyltransferase TrmFO (Streptococcus thermophilus (strain ATCC BAA-250 / LMG 18311)).